The following is a 1728-amino-acid chain: Mitochondrial 3' processome subunit 1 (1728 aa).

The transit peptide at 1–117 (MRRLILSQTL…AGKMTGSSRF (117 aa)) directs the protein to the mitochondrion. Disordered regions lie at residues 45–71 (HRKREGRMYGKPLRPVSDGENGASGDG), 88–156 (ESPV…IGQQ), and 829–863 (GCNRDGGPSRPNTATDSANKKVVSGKQTDNLPKGT).

In terms of assembly, component of the mitochondrial 3' processome (MPsome) complex composed at least of terminal uridylyltransferase KRET1/TUT1, 3'-5' exonuclease DSS1, MPSS1, MPSS2 and MPSS3. Within the complex, interacts with KRET1.

Its subcellular location is the mitochondrion. Functionally, as part of the mitochondrial 3' processome (MPsome), involved in the maturation of guided RNA (gRNA) precursors. The protein is Mitochondrial 3' processome subunit 1 of Trypanosoma brucei brucei.